The primary structure comprises 101 residues: RNA silencing suppressor (101 aa).

Residues Arg47–Arg50 form a basic region. The segment at Cys57 to Cys78 adopts a C4-type zinc-finger fold.

It belongs to the carlaviruses nucleic acid-binding protein family.

Functionally, suppressor of viral-induced RNA silencing. The potential mechanism of action is based on sequestering siRNAs. This Dianthus caryophyllus (Carnation) protein is RNA silencing suppressor (TUC).